The following is a 530-amino-acid chain: Na(+)/H(+) antiporter NhaB (530 aa).

The next 10 membrane-spanning stretches (helical) occupy residues 13–33 (FLGQ…LINP), 67–87 (PGGL…ETVL), 90–110 (VVGN…IYFL), 138–158 (AAAL…VIAV), 205–225 (LLMH…VGEP), 245–265 (MAPI…FLEF), 302–333 (LVIQ…VIIL), 350–370 (FEEA…VAVI), 449–469 (VATP…LAPL), and 477–497 (MVIM…VMTA).

It belongs to the NhaB Na(+)/H(+) (TC 2.A.34) antiporter family.

Its subcellular location is the cell inner membrane. The catalysed reaction is 2 Na(+)(in) + 3 H(+)(out) = 2 Na(+)(out) + 3 H(+)(in). Na(+)/H(+) antiporter that extrudes sodium in exchange for external protons. This chain is Na(+)/H(+) antiporter NhaB, found in Alcanivorax borkumensis (strain ATCC 700651 / DSM 11573 / NCIMB 13689 / SK2).